The primary structure comprises 254 residues: MALPLLEYKLSSQNHRVKSFGVADQNEDTPYIYRLEDVSSFTDIQNIIWAAYRQVFSEHEILRFNRQKHLESQLKSGLITVRDFIRGLAKSEAFYRLVVSVNNNYRLVDVVLKRLLGRSAYNKEEEIAWSIVIGTKGFDGFVDAIVDSDEYTQAFGDNTVPYQRKRLVDRPHNLVTPRYGEDFQETAGTVKTDWRFTLQNFYSRKFQERQLREGDPRKYTDMAAAIAPKGNYAQNIRAADLDYLNLVPSRTRRF.

Positions 11–191 constitute a PBS-linker domain; the sequence is SSQNHRVKSF…DFQETAGTVK (181 aa).

The protein belongs to the phycobilisome linker protein family. As to quaternary structure, the phycobilisome is a hemidiscoidal structure that is composed of two distinct substructures: a core complex and a number of rods radiating from the core.

The protein localises to the cellular thylakoid membrane. Rod-core linker protein required for attachment of phycocyanin to allophycocyanin in cores of phycobilisomes. In terms of biological role, linker polypeptides determine the state of aggregation and the location of the disk-shaped phycobiliprotein units within the phycobilisome and modulate their spectroscopic properties in order to mediate a directed and optimal energy transfer. In Mastigocladus laminosus (Fischerella sp.), this protein is Phycobilisome rod-core linker polypeptide CpcG3 (cpcG3).